The sequence spans 503 residues: Maturase K (503 aa).

It belongs to the intron maturase 2 family. MatK subfamily.

It is found in the plastid. Its subcellular location is the chloroplast. Usually encoded in the trnK tRNA gene intron. Probably assists in splicing its own and other chloroplast group II introns. The chain is Maturase K from Vicia sativa (Spring vetch).